The following is a 289-amino-acid chain: Acetyl-coenzyme A carboxylase carboxyl transferase subunit beta (289 aa).

The 267-residue stretch at 23-289 folds into the CoA carboxyltransferase N-terminal domain; the sequence is HWIKCPSCSA…YDENPCLLHL (267 aa). Cys-27, Cys-30, Cys-46, and Cys-49 together coordinate Zn(2+). Residues 27–49 form a C4-type zinc finger; the sequence is CPSCSALMYYKEVIAQHHVCPKC.

Belongs to the AccD/PCCB family. In terms of assembly, acetyl-CoA carboxylase is a heterohexamer composed of biotin carboxyl carrier protein (AccB), biotin carboxylase (AccC) and two subunits each of ACCase subunit alpha (AccA) and ACCase subunit beta (AccD). It depends on Zn(2+) as a cofactor.

The protein resides in the cytoplasm. The catalysed reaction is N(6)-carboxybiotinyl-L-lysyl-[protein] + acetyl-CoA = N(6)-biotinyl-L-lysyl-[protein] + malonyl-CoA. Its pathway is lipid metabolism; malonyl-CoA biosynthesis; malonyl-CoA from acetyl-CoA: step 1/1. Functionally, component of the acetyl coenzyme A carboxylase (ACC) complex. Biotin carboxylase (BC) catalyzes the carboxylation of biotin on its carrier protein (BCCP) and then the CO(2) group is transferred by the transcarboxylase to acetyl-CoA to form malonyl-CoA. The polypeptide is Acetyl-coenzyme A carboxylase carboxyl transferase subunit beta (Wolinella succinogenes (strain ATCC 29543 / DSM 1740 / CCUG 13145 / JCM 31913 / LMG 7466 / NCTC 11488 / FDC 602W) (Vibrio succinogenes)).